Here is a 242-residue protein sequence, read N- to C-terminus: UPF0309 protein BOV_A0853 (242 aa).

The 180-residue stretch at 30–209 folds into the SIS domain; sequence AADLIAAAAR…FADVAARLVG (180 aa).

This sequence belongs to the UPF0309 family.

This is UPF0309 protein BOV_A0853 from Brucella ovis (strain ATCC 25840 / 63/290 / NCTC 10512).